A 179-amino-acid polypeptide reads, in one-letter code: Large ribosomal subunit protein uL5 (179 aa).

This sequence belongs to the universal ribosomal protein uL5 family. In terms of assembly, part of the 50S ribosomal subunit; part of the 5S rRNA/L5/L18/L25 subcomplex. Contacts the 5S rRNA and the P site tRNA. Forms a bridge to the 30S subunit in the 70S ribosome.

In terms of biological role, this is one of the proteins that bind and probably mediate the attachment of the 5S RNA into the large ribosomal subunit, where it forms part of the central protuberance. In the 70S ribosome it contacts protein S13 of the 30S subunit (bridge B1b), connecting the 2 subunits; this bridge is implicated in subunit movement. Contacts the P site tRNA; the 5S rRNA and some of its associated proteins might help stabilize positioning of ribosome-bound tRNAs. The protein is Large ribosomal subunit protein uL5 of Macrococcus caseolyticus (strain JCSC5402) (Macrococcoides caseolyticum).